Here is a 283-residue protein sequence, read N- to C-terminus: MAEMAVTAALRPCSGVSPAVSGTSHRRRRPAAWRALAPPPPHAGLRLSSPAVRVPRAASSAAVEDGSSSNTDTVPTPKVIIDQDSDPDATIVEITLGDRLGDLLDTMNALKNLGLNVVKASVCLDSTGKHIKLAITKLSTGRKIGEPELLEAVRLTIINNMIQYHPEASSQLALGATFGPEPPTELVDVDIATHIDIYDDGPDRSLLVVETADRPGLLVDLVKIIDDINITVQSGEFDTEGLLAKAKFHVSYRGKPLIKALQQVLANSLRYFLRRPTTEEGSY.

Residues 1 to 56 constitute a chloroplast transit peptide; sequence MAEMAVTAALRPCSGVSPAVSGTSHRRRRPAAWRALAPPPPHAGLRLSSPAVRVPR. Residues 14–78 form a disordered region; it reads SGVSPAVSGT…SNTDTVPTPK (65 aa). Residues 48-63 are compositionally biased toward low complexity; sequence SSPAVRVPRAASSAAV. ACT domains follow at residues 91-171 and 206-276; these read IVEI…ASSQ and LLVV…LRRP.

It is found in the plastid. The protein resides in the chloroplast. This chain is ACT domain-containing protein DS12, chloroplastic, found in Oryza sativa subsp. indica (Rice).